Here is a 397-residue protein sequence, read N- to C-terminus: Lipid-A-disaccharide synthase (397 aa).

It belongs to the LpxB family.

The catalysed reaction is a lipid X + a UDP-2-N,3-O-bis[(3R)-3-hydroxyacyl]-alpha-D-glucosamine = a lipid A disaccharide + UDP + H(+). It participates in bacterial outer membrane biogenesis; LPS lipid A biosynthesis. In terms of biological role, condensation of UDP-2,3-diacylglucosamine and 2,3-diacylglucosamine-1-phosphate to form lipid A disaccharide, a precursor of lipid A, a phosphorylated glycolipid that anchors the lipopolysaccharide to the outer membrane of the cell. This chain is Lipid-A-disaccharide synthase, found in Mannheimia succiniciproducens (strain KCTC 0769BP / MBEL55E).